We begin with the raw amino-acid sequence, 327 residues long: MTAATAQNIKSSLNTDRLKLISGTSNPILAKEISSYIGIEDVPVVSKRFADGELYVQIQQSIRGCDVFLIQPTCAPVNDSLMELMIMVDACKRASARQVTAVIPYFGYARADRKTAGRESITAKLTANLLVSSGVDRVLAMDLHSAQIQGYFDIPCDHIYGSPVLIDYLSTKNLDEIVVVSPDVGGVARARAFAKQMKDSPLAIIDKRRAAHNVAQSLTVIGDVANKTAILIDDMIDTGGTICAGAELLRKEGAKRVIACASHAVFSPPAYSRLSADDLFEEVVVTNSIPVPTSQYFEQLKVLSVANMLGEAIWRVHEESSISSMFR.

Position 51 to 53 (51 to 53) interacts with ATP; sequence DGE. Residues His-144 and Asp-183 each contribute to the Mg(2+) site. Residue Lys-207 is part of the active site. D-ribose 5-phosphate contacts are provided by residues Arg-209, Asp-233, and 237-241; that span reads DTGGT.

Belongs to the ribose-phosphate pyrophosphokinase family. Class I subfamily. In terms of assembly, homohexamer. Mg(2+) is required as a cofactor.

The protein resides in the cytoplasm. It carries out the reaction D-ribose 5-phosphate + ATP = 5-phospho-alpha-D-ribose 1-diphosphate + AMP + H(+). It participates in metabolic intermediate biosynthesis; 5-phospho-alpha-D-ribose 1-diphosphate biosynthesis; 5-phospho-alpha-D-ribose 1-diphosphate from D-ribose 5-phosphate (route I): step 1/1. Involved in the biosynthesis of the central metabolite phospho-alpha-D-ribosyl-1-pyrophosphate (PRPP) via the transfer of pyrophosphoryl group from ATP to 1-hydroxyl of ribose-5-phosphate (Rib-5-P). This chain is Ribose-phosphate pyrophosphokinase, found in Prochlorococcus marinus (strain SARG / CCMP1375 / SS120).